Here is a 130-residue protein sequence, read N- to C-terminus: Large ribosomal subunit protein bL19 (130 aa).

The protein belongs to the bacterial ribosomal protein bL19 family.

This protein is located at the 30S-50S ribosomal subunit interface and may play a role in the structure and function of the aminoacyl-tRNA binding site. This chain is Large ribosomal subunit protein bL19, found in Gluconobacter oxydans (strain 621H) (Gluconobacter suboxydans).